Consider the following 207-residue polypeptide: Protein lin-7 homolog B (207 aa).

A Kinase interacting site motif is present at residues 1 to 13 (MAALVEPLGLERD). In terms of domain architecture, L27 spans 10-65 (LERDVSRAVELLERLQRSGELPPQKLQALQRVLQSRFCSAIREVYEQLYDTLDITG). The 83-residue stretch at 93 to 175 (VVELPKTDEG…SVKLVVRYTP (83 aa)) folds into the PDZ domain. The segment at 187–207 (KMRSARRRQQHQSYSSLESRG) is disordered. Residues 197–207 (HQSYSSLESRG) show a composition bias toward polar residues.

It belongs to the lin-7 family. Forms a complex with CASK and CASKIN1. Component of the brain-specific heterotrimeric complex (LIN-10-LIN-2-LIN-7 complex) composed of at least APBA1, CASK, and LIN7, which associates with the motor protein KIF17 to transport vesicles along microtubules. Forms a heterotrimeric complex composed of MMP5, LIN7B and PATJ; the N-terminal L27 domain of PALS1 interacts with the L27 domain of PATJ and the C-terminal L27 domain of PALS1 interacts with the L27 domain of LIN7B. Forms a heterotrimeric complex with DLG1 and CASK via their L27 domains. Interacts with DLG4 and GRIN2B as well as CDH1 and CTNNB1, the channels KCNJ12/Kir2.2, KCNJ4/Kir2.3 and probably KCNJ2/Kir2.1 and SLC6A12/BGT-1 via its PDZ domain. The association of LIN7A with cadherin and beta-catenin is calcium-dependent, occurs at synaptic junctions and requires the actin cytoskeleton. Interacts with EGFR, ERBB2, ERBB3 and ERBB4 with both PDZ and KID domains. Associates with KIF17 via APBA1. Interacts with ASIC3. Interacts with TOPK. Interacts with RTKN. Interacts with APBA1. Interacts with MPP7. Interacts with DLG2. Interacts with DLG3.

Its subcellular location is the cell membrane. The protein resides in the basolateral cell membrane. It localises to the cell junction. It is found in the postsynaptic density membrane. The protein localises to the tight junction. In terms of biological role, plays a role in establishing and maintaining the asymmetric distribution of channels and receptors at the plasma membrane of polarized cells. Forms membrane-associated multiprotein complexes that may regulate delivery and recycling of proteins to the correct membrane domains. The tripartite complex composed of LIN7 (LIN7A, LIN7B or LIN7C), CASK and APBA1 associates with the motor protein KIF17 to transport vesicles containing N-methyl-D-aspartate (NMDA) receptor subunit NR2B along microtubules. This complex may have the potential to couple synaptic vesicle exocytosis to cell adhesion in brain. Ensures the proper localization of GRIN2B (subunit 2B of the NMDA receptor) to neuronal postsynaptic density and may function in localizing synaptic vesicles at synapses where it is recruited by beta-catenin and cadherin. Required to localize Kir2 channels, GABA transporter (SLC6A12) and EGFR/ERBB1, ERBB2, ERBB3 and ERBB4 to the basolateral membrane of epithelial cells. May increase the amplitude of ASIC3 acid-evoked currents by stabilizing the channel at the cell surface. This chain is Protein lin-7 homolog B (LIN7B), found in Homo sapiens (Human).